The primary structure comprises 418 residues: Methylmalonic aciduria type A protein, mitochondrial (418 aa).

A mitochondrion-targeting transit peptide spans 1–65 (MPMLLPHPHQ…LLSDGLKRKL (65 aa)). GTP contacts are provided by residues 150-158 (GPPGAGKST), D292, and 328-330 (SAR).

This sequence belongs to the SIMIBI class G3E GTPase family. ArgK/MeaB subfamily. Homodimer. Interacts with MMUT (the apoenzyme form); the interaction is GTP dependent. In terms of tissue distribution, widely expressed. Highest expression is observed in liver and skeletal muscle.

Its subcellular location is the mitochondrion. The protein localises to the cytoplasm. It catalyses the reaction GTP + H2O = GDP + phosphate + H(+). Its activity is regulated as follows. GTPase activity is stimulated by MMUT. Functionally, GTPase, binds and hydrolyzes GTP. Involved in intracellular vitamin B12 metabolism, mediates the transport of cobalamin (Cbl) into mitochondria for the final steps of adenosylcobalamin (AdoCbl) synthesis. Functions as a G-protein chaperone that assists AdoCbl cofactor delivery from MMAB to the methylmalonyl-CoA mutase (MMUT). Plays a dual role as both a protectase and a reactivase for MMUT. Protects MMUT from progressive inactivation by oxidation by decreasing the rate of the formation of the oxidized inactive cofactor hydroxocobalamin (OH2Cbl). Additionally acts a reactivase by promoting the replacement of OH2Cbl by the active cofactor AdoCbl, restoring the activity of MMUT in the presence and hydrolysis of GTP. The polypeptide is Methylmalonic aciduria type A protein, mitochondrial (Homo sapiens (Human)).